Consider the following 789-residue polypeptide: 1-phosphatidylinositol 4,5-bisphosphate phosphodiesterase delta-3 (789 aa).

One can recognise a PH domain in the interval 63–172 (RAMLRGSRLR…WVRGLTKLRA (110 aa)). The interval 73–101 (KIRSRTWHKERLYRLQEDGLSVWFQRRIP) is substrate binding. Ser-105 is subject to Phosphoserine. 3 EF-hand domains span residues 182–217 (RLDH…VNVD), 218–253 (MNDM…LLKR), and 250–285 (LLKR…QGEE). Ca(2+)-binding residues include Asp-195, Asn-197, Asp-199, Lys-201, Glu-206, Asp-231, Ser-233, Asn-235, Arg-237, and Glu-242. Positions 337–482 (QDMNQPLAHY…LKGRVLVKGK (146 aa)) constitute a PI-PLC X-box domain. His-352 is a catalytic residue. The Ca(2+) site is built by Asn-353, Glu-382, and Asp-384. His-397 is an active-site residue. A Ca(2+)-binding site is contributed by Glu-431. Residues 461-519 (SPNPEELPSPEQLKGRVLVKGKKLPAARSEDGRALSDREEEEEDDEEEEEEVEAAAQRR) form a disordered region. Lys-480 and Lys-482 together coordinate substrate. Positions 488-497 (RSEDGRALSD) are enriched in basic and acidic residues. At Ser-496 the chain carries Phosphoserine. Residues 498 to 513 (REEEEEDDEEEEEEVE) are compositionally biased toward acidic residues. One can recognise a PI-PLC Y-box domain in the interval 528 to 644 (LSALAVYCHA…GYVLKPACLR (117 aa)). Ser-557 is a substrate binding site. Ser-573 bears the Phosphoserine mark. Substrate is bound at residue Arg-584. One can recognise a C2 domain in the interval 644-769 (RQPDSTFDPE…QGYRHIHLLS (126 aa)). Positions 683, 685, 709, 738, 739, and 740 each coordinate Ca(2+).

Requires Ca(2+) as cofactor. As to expression, present in corneal epithelial cells (at protein level).

It localises to the membrane. The protein localises to the cytoplasm. Its subcellular location is the cleavage furrow. It carries out the reaction a 1,2-diacyl-sn-glycero-3-phospho-(1D-myo-inositol-4,5-bisphosphate) + H2O = 1D-myo-inositol 1,4,5-trisphosphate + a 1,2-diacyl-sn-glycerol + H(+). Strongly activated by phosphatidic acid. Inhibited by phosphatidylethanolamine (PtdEtn), phosphatidylcholine (PtdCho), sphingomyelin and phosphatidylserine (PtdSer). Hydrolyzes the phosphatidylinositol 4,5-bisphosphate (PIP2) to generate 2 second messenger molecules diacylglycerol (DAG) and inositol 1,4,5-trisphosphate (IP3). DAG mediates the activation of protein kinase C (PKC), while IP3 releases Ca(2+) from intracellular stores. Essential for trophoblast and placental development. May participate in cytokinesis by hydrolyzing PIP2 at the cleavage furrow. Regulates neurite outgrowth through the inhibition of RhoA/Rho kinase signaling. The chain is 1-phosphatidylinositol 4,5-bisphosphate phosphodiesterase delta-3 from Homo sapiens (Human).